We begin with the raw amino-acid sequence, 63 residues long: Toxin Cn11 (63 aa).

The LCN-type CS-alpha/beta domain maps to 2–63; the sequence is RDGYPVDEKG…KVWTYETNTC (62 aa). 4 disulfide bridges follow: Cys12/Cys63, Cys16/Cys37, Cys23/Cys44, and Cys27/Cys46.

The protein belongs to the long (4 C-C) scorpion toxin superfamily. Sodium channel inhibitor family. Expressed by the venom gland.

The protein localises to the secreted. In terms of biological role, first blocker of sodium channels (Nav) found in scorpions. Is lethal to crustaceans (Cambarellus montezumae), less toxic to insects (crickets) and non-toxic to mammals (mice) at the doses assayed. The polypeptide is Toxin Cn11 (Centruroides noxius (Mexican scorpion)).